A 303-amino-acid polypeptide reads, in one-letter code: Mycothiol acetyltransferase (303 aa).

Asp-33 is a 1D-myo-inositol 2-(L-cysteinylamino)-2-deoxy-alpha-D-glucopyranoside binding site. Acetyl-CoA-binding positions include 78 to 80 (VVV) and 86 to 91 (RRGTGS). An N-acetyltransferase domain is found at 150-303 (VRFATYSGPH…AYAAVAPTDV (154 aa)). Residues Glu-177, Lys-218, and Glu-226 each contribute to the 1D-myo-inositol 2-(L-cysteinylamino)-2-deoxy-alpha-D-glucopyranoside site. Residue 230 to 232 (VGV) coordinates acetyl-CoA. Position 269 (Tyr-269) interacts with 1D-myo-inositol 2-(L-cysteinylamino)-2-deoxy-alpha-D-glucopyranoside. 274 to 279 (NTAAVK) serves as a coordination point for acetyl-CoA.

This sequence belongs to the acetyltransferase family. MshD subfamily. In terms of assembly, monomer.

The catalysed reaction is 1D-myo-inositol 2-(L-cysteinylamino)-2-deoxy-alpha-D-glucopyranoside + acetyl-CoA = mycothiol + CoA + H(+). Functionally, catalyzes the transfer of acetyl from acetyl-CoA to desacetylmycothiol (Cys-GlcN-Ins) to form mycothiol. This Mycolicibacterium gilvum (strain PYR-GCK) (Mycobacterium gilvum (strain PYR-GCK)) protein is Mycothiol acetyltransferase.